The primary structure comprises 110 residues: Protein YcgL (110 aa).

One can recognise a YcgL domain in the interval 14–98; that stretch reads MFCVIYRSSK…PPEDLLKQHL (85 aa). The disordered stretch occupies residues 87–110; that stretch reads PPPPEDLLKQHLSSVGQNTSSADR. The span at 97-110 shows a compositional bias: polar residues; it reads HLSSVGQNTSSADR.

The polypeptide is Protein YcgL (Salmonella newport (strain SL254)).